A 201-amino-acid chain; its full sequence is Large ribosomal subunit protein bL25 (201 aa).

This sequence belongs to the bacterial ribosomal protein bL25 family. CTC subfamily. Part of the 50S ribosomal subunit; part of the 5S rRNA/L5/L18/L25 subcomplex. Contacts the 5S rRNA. Binds to the 5S rRNA independently of L5 and L18.

Its function is as follows. This is one of the proteins that binds to the 5S RNA in the ribosome where it forms part of the central protuberance. The protein is Large ribosomal subunit protein bL25 of Thiobacillus denitrificans (strain ATCC 25259 / T1).